A 355-amino-acid polypeptide reads, in one-letter code: Probable aldo-keto reductase 3 (355 aa).

Y70 acts as the Proton donor in catalysis. H138 provides a ligand contact to substrate. 217 to 227 contributes to the NADP(+) binding site; the sequence is SPLGRGFFSSG.

This sequence belongs to the aldo/keto reductase family.

The protein is Probable aldo-keto reductase 3 of Oryza sativa subsp. japonica (Rice).